A 204-amino-acid chain; its full sequence is Capsid protein (204 aa).

The segment covering 183-194 (EFSSESPVTSLK) has biased composition (polar residues). Residues 183 to 204 (EFSSESPVTSLKQLGRGLGTGR) form a disordered region.

Belongs to the closteroviridae capsid protein family.

It localises to the virion. Its function is as follows. Component that constitutes the body part of the virion. Also acts as a movement protein that is involved in local cell-cell movement via plamodesmata. At least five viral proteins, CP, CPm, p6, p64 and Hsp70h are essential for cell-cell movement. The protein is Capsid protein of Beet yellows virus (isolate Ukraine) (BYV).